Reading from the N-terminus, the 363-residue chain is Outer membrane protein P2 (363 aa).

Positions Met-1–Ala-20 are cleaved as a signal peptide.

Belongs to the Gram-negative porin family. In terms of assembly, homotrimer.

The protein localises to the cell outer membrane. Its function is as follows. Forms pores that allow passive diffusion of small molecules across the outer membrane. This Haemophilus influenzae protein is Outer membrane protein P2 (ompP2).